Consider the following 96-residue polypeptide: Aspartyl/glutamyl-tRNA(Asn/Gln) amidotransferase subunit C (96 aa).

Belongs to the GatC family. In terms of assembly, heterotrimer of A, B and C subunits.

It carries out the reaction L-glutamyl-tRNA(Gln) + L-glutamine + ATP + H2O = L-glutaminyl-tRNA(Gln) + L-glutamate + ADP + phosphate + H(+). It catalyses the reaction L-aspartyl-tRNA(Asn) + L-glutamine + ATP + H2O = L-asparaginyl-tRNA(Asn) + L-glutamate + ADP + phosphate + 2 H(+). Allows the formation of correctly charged Asn-tRNA(Asn) or Gln-tRNA(Gln) through the transamidation of misacylated Asp-tRNA(Asn) or Glu-tRNA(Gln) in organisms which lack either or both of asparaginyl-tRNA or glutaminyl-tRNA synthetases. The reaction takes place in the presence of glutamine and ATP through an activated phospho-Asp-tRNA(Asn) or phospho-Glu-tRNA(Gln). This Exiguobacterium sibiricum (strain DSM 17290 / CCUG 55495 / CIP 109462 / JCM 13490 / 255-15) protein is Aspartyl/glutamyl-tRNA(Asn/Gln) amidotransferase subunit C.